Here is a 630-residue protein sequence, read N- to C-terminus: Chaperone protein HtpG (630 aa).

Residues 1–327 (MSVETYKFDA…SEDLSLNISR (327 aa)) are a; substrate-binding. The tract at residues 328–551 (ETLQHSPLID…EGSMDIRTER (224 aa)) is b. Positions 483 to 499 (TKTAKSSDTNNDGKDDT) are enriched in basic and acidic residues. Residues 483–504 (TKTAKSSDTNNDGKDDTSSSDD) form a disordered region. A c region spans residues 552–630 (FLIEQKQLSS…INFFIEKSVN (79 aa)).

It belongs to the heat shock protein 90 family. In terms of assembly, homodimer.

It localises to the cytoplasm. Functionally, molecular chaperone. Has ATPase activity. In Orientia tsutsugamushi (strain Boryong) (Rickettsia tsutsugamushi), this protein is Chaperone protein HtpG.